A 97-amino-acid polypeptide reads, in one-letter code: UPF0473 protein Exig_2070 (97 aa).

This sequence belongs to the UPF0473 family.

This is UPF0473 protein Exig_2070 from Exiguobacterium sibiricum (strain DSM 17290 / CCUG 55495 / CIP 109462 / JCM 13490 / 255-15).